The following is a 67-amino-acid chain: DNA-directed RNA polymerase subunit omega (67 aa).

It belongs to the RNA polymerase subunit omega family. As to quaternary structure, the RNAP catalytic core consists of 2 alpha, 1 beta, 1 beta' and 1 omega subunit. When a sigma factor is associated with the core the holoenzyme is formed, which can initiate transcription.

It catalyses the reaction RNA(n) + a ribonucleoside 5'-triphosphate = RNA(n+1) + diphosphate. Its function is as follows. Promotes RNA polymerase assembly. Latches the N- and C-terminal regions of the beta' subunit thereby facilitating its interaction with the beta and alpha subunits. The polypeptide is DNA-directed RNA polymerase subunit omega (Listeria welshimeri serovar 6b (strain ATCC 35897 / DSM 20650 / CCUG 15529 / CIP 8149 / NCTC 11857 / SLCC 5334 / V8)).